The chain runs to 141 residues: MAKKIVAVIKLALQAGKANPAPPVGPALGQHGVNIMAFCKEYNARTQDKAGFVIPVEISVFEDRSFTFITKTPPASVLITKAAGIEKGAGESSKGSVGNISKSQLEEIAKTKLPDLNCTSIESAMKVIEGTARNMGVSITE.

The protein belongs to the universal ribosomal protein uL11 family. In terms of assembly, part of the ribosomal stalk of the 50S ribosomal subunit. Interacts with L10 and the large rRNA to form the base of the stalk. L10 forms an elongated spine to which L12 dimers bind in a sequential fashion forming a multimeric L10(L12)X complex. In terms of processing, one or more lysine residues are methylated.

Its function is as follows. Forms part of the ribosomal stalk which helps the ribosome interact with GTP-bound translation factors. The polypeptide is Large ribosomal subunit protein uL11 (Prochlorococcus marinus subsp. pastoris (strain CCMP1986 / NIES-2087 / MED4)).